A 390-amino-acid polypeptide reads, in one-letter code: GTPase Obg (390 aa).

In terms of domain architecture, Obg spans 1 to 159; it reads MKFVDEATIK…RELRLELLLL (159 aa). Residues 160–333 form the OBG-type G domain; the sequence is ADVGMLGLPN…LCDELADFMD (174 aa). GTP is bound by residues 166–173, 191–195, 213–216, 283–286, and 314–316; these read GLPNAGKS, FTTLI, DIPG, NKTD, and AAV. Residues serine 173 and threonine 193 each contribute to the Mg(2+) site.

The protein belongs to the TRAFAC class OBG-HflX-like GTPase superfamily. OBG GTPase family. In terms of assembly, monomer. Requires Mg(2+) as cofactor.

It is found in the cytoplasm. In terms of biological role, an essential GTPase which binds GTP, GDP and possibly (p)ppGpp with moderate affinity, with high nucleotide exchange rates and a fairly low GTP hydrolysis rate. Plays a role in control of the cell cycle, stress response, ribosome biogenesis and in those bacteria that undergo differentiation, in morphogenesis control. This chain is GTPase Obg, found in Aliivibrio fischeri (strain ATCC 700601 / ES114) (Vibrio fischeri).